Reading from the N-terminus, the 445-residue chain is UPF0210 protein Ccon26_06850 (445 aa).

This sequence belongs to the UPF0210 family. In terms of assembly, homodimer.

The chain is UPF0210 protein Ccon26_06850 from Campylobacter concisus (strain 13826).